An 877-amino-acid polypeptide reads, in one-letter code: Alanine--tRNA ligase (877 aa).

Residues His562, His566, Cys664, and His668 each contribute to the Zn(2+) site.

This sequence belongs to the class-II aminoacyl-tRNA synthetase family. The cofactor is Zn(2+).

The protein localises to the cytoplasm. The catalysed reaction is tRNA(Ala) + L-alanine + ATP = L-alanyl-tRNA(Ala) + AMP + diphosphate. Functionally, catalyzes the attachment of alanine to tRNA(Ala) in a two-step reaction: alanine is first activated by ATP to form Ala-AMP and then transferred to the acceptor end of tRNA(Ala). Also edits incorrectly charged Ser-tRNA(Ala) and Gly-tRNA(Ala) via its editing domain. In Synechocystis sp. (strain ATCC 27184 / PCC 6803 / Kazusa), this protein is Alanine--tRNA ligase.